A 315-amino-acid polypeptide reads, in one-letter code: Olfactory receptor 4K3 (315 aa).

Topologically, residues 1–25 (MAWSNQSAVTEFILRGLSSSLELQI) are extracellular. Asn-5 carries an N-linked (GlcNAc...) asparagine glycan. The chain crosses the membrane as a helical span at residues 26-49 (FYFLFFSIVYAATVLGNLLIVVTI). The Cytoplasmic segment spans residues 50-57 (ASEPHLHS). A helical transmembrane segment spans residues 58–79 (PMYFLLGNLSFIDMSLASFATP). Over 80-100 (KMIADFLREHKAISFEGCMTQ) the chain is Extracellular. Residues Cys-97 and Cys-189 are joined by a disulfide bond. Residues 101-120 (MFFLHLLGGAEIVLLISMSF) traverse the membrane as a helical segment. Residues 121–139 (DRYVAICKPLHYLTIMSRR) lie on the Cytoplasmic side of the membrane. A helical membrane pass occupies residues 140 to 158 (MCVGLVILSWIVGIFHALS). Over 159–195 (QLAFTVNLPFCGPNEVDSFFCDLPLVIKLACVDTYIL) the chain is Extracellular. The helical transmembrane segment at 196–219 (GVFMISTSGMIALVCFILLVISYT) threads the bilayer. Over 220–235 (IILVTVRQRSSGGSSK) the chain is Cytoplasmic. Residues 236–258 (ALSTCSAHFTVVTLFFGPCTFIY) traverse the membrane as a helical segment. Residues 259-269 (VWPFTNFPIDK) are Extracellular-facing. Residues 270-289 (VLSVFYTIYTPLLNPVIYTV) traverse the membrane as a helical segment. Topologically, residues 290–315 (RNKDVKYSMRKLSSHIFKSRKTDHTP) are cytoplasmic.

This sequence belongs to the G-protein coupled receptor 1 family.

It is found in the cell membrane. Functionally, odorant receptor. The chain is Olfactory receptor 4K3 (OR4K3) from Homo sapiens (Human).